We begin with the raw amino-acid sequence, 859 residues long: Magnesium transporter ALR1 (859 aa).

Residues 1–20 (MSSSSSSSESSPNLSRSNSL) are compositionally biased toward low complexity. Disordered stretches follow at residues 1 to 281 (MSSS…MPPQ) and 330 to 399 (TSST…NIPS). Residue Ser-2 is modified to N-acetylserine. 2 stretches are compositionally biased toward basic and acidic residues: residues 28–42 (KTED…RQHP) and 55–73 (KNKE…EQKS). Residue Tyr-77 is modified to Phosphotyrosine. Phosphoserine is present on Ser-85. Basic and acidic residues predominate over residues 144–154 (PPKDVGVKRDY). The span at 157–176 (SSSTASSGNKSKLSASSSAS) shows a compositional bias: low complexity. A phosphoserine mark is found at Ser-185 and Ser-188. A compositionally biased stretch (basic and acidic residues) spans 193–203 (IPHESKSDTHS). Polar residues predominate over residues 213–235 (YSTTSAHSSINPAVLLTKSTSQK). Residues Ser-220, Ser-221, and Ser-236 each carry the phosphoserine modification. A Phosphothreonine modification is found at Thr-242. The segment covering 252–265 (TRASFDSDVSQASR) has biased composition (polar residues). Low complexity predominate over residues 330–339 (TSSTSTSGSS). The segment covering 353–375 (EKSESTNETEIHEKKEDEHEKIK) has biased composition (basic and acidic residues). The next 2 helical transmembrane spans lie at 744 to 764 (TMIG…GMNV) and 773 to 793 (IAWW…GWFL). Positions 830 to 859 (FNDRSKNINVRAGPSNKSVASLPSRYSRYD) are disordered. Position 850 is a phosphoserine (Ser-850).

Belongs to the CorA metal ion transporter (MIT) (TC 1.A.35) family.

The protein resides in the cell membrane. Plasma membrane magnesium transporter. This is Magnesium transporter ALR1 (ALR1) from Saccharomyces cerevisiae (strain ATCC 204508 / S288c) (Baker's yeast).